A 544-amino-acid polypeptide reads, in one-letter code: Chaperonin GroEL (544 aa).

Residues 29–32 (TIGP), 86–90 (DGTTT), Gly-413, 478–480 (NAA), and Asp-494 contribute to the ATP site.

Belongs to the chaperonin (HSP60) family. As to quaternary structure, forms a cylinder of 14 subunits composed of two heptameric rings stacked back-to-back. Interacts with the co-chaperonin GroES.

The protein localises to the cytoplasm. It carries out the reaction ATP + H2O + a folded polypeptide = ADP + phosphate + an unfolded polypeptide.. Together with its co-chaperonin GroES, plays an essential role in assisting protein folding. The GroEL-GroES system forms a nano-cage that allows encapsulation of the non-native substrate proteins and provides a physical environment optimized to promote and accelerate protein folding. The protein is Chaperonin GroEL of Exiguobacterium sp. (strain ATCC BAA-1283 / AT1b).